A 657-amino-acid polypeptide reads, in one-letter code: Methionine--tRNA ligase (657 aa).

The short motif at 13-23 (YYPSGNLHIGH) is the 'HIGH' region element. A 'KMSKS' region motif is present at residues 308–312 (KMSKS). Lysine 311 contributes to the ATP binding site. The tRNA-binding domain occupies 557-657 (DFDKVEIKAA…SAIPNGAVIK (101 aa)).

The protein belongs to the class-I aminoacyl-tRNA synthetase family. MetG type 2B subfamily. As to quaternary structure, homodimer.

It is found in the cytoplasm. The catalysed reaction is tRNA(Met) + L-methionine + ATP = L-methionyl-tRNA(Met) + AMP + diphosphate. Is required not only for elongation of protein synthesis but also for the initiation of all mRNA translation through initiator tRNA(fMet) aminoacylation. This chain is Methionine--tRNA ligase, found in Staphylococcus aureus (strain COL).